The primary structure comprises 500 residues: Probable cytosol aminopeptidase (500 aa).

Positions 267 and 272 each coordinate Mn(2+). Lys279 is an active-site residue. Mn(2+) contacts are provided by Asp290, Asp349, and Glu351. Residue Arg353 is part of the active site.

This sequence belongs to the peptidase M17 family. Requires Mn(2+) as cofactor.

It localises to the cytoplasm. It catalyses the reaction Release of an N-terminal amino acid, Xaa-|-Yaa-, in which Xaa is preferably Leu, but may be other amino acids including Pro although not Arg or Lys, and Yaa may be Pro. Amino acid amides and methyl esters are also readily hydrolyzed, but rates on arylamides are exceedingly low.. The enzyme catalyses Release of an N-terminal amino acid, preferentially leucine, but not glutamic or aspartic acids.. Presumably involved in the processing and regular turnover of intracellular proteins. Catalyzes the removal of unsubstituted N-terminal amino acids from various peptides. This chain is Probable cytosol aminopeptidase, found in Tolumonas auensis (strain DSM 9187 / NBRC 110442 / TA 4).